Reading from the N-terminus, the 576-residue chain is Arginine--tRNA ligase (576 aa).

A 'HIGH' region motif is present at residues 122 to 132 (PNVAKQMHVGH).

Belongs to the class-I aminoacyl-tRNA synthetase family. Monomer.

It is found in the cytoplasm. The enzyme catalyses tRNA(Arg) + L-arginine + ATP = L-arginyl-tRNA(Arg) + AMP + diphosphate. This Proteus mirabilis (strain HI4320) protein is Arginine--tRNA ligase.